A 383-amino-acid polypeptide reads, in one-letter code: GTP-binding protein 10 homolog (383 aa).

In terms of domain architecture, Obg spans 22–157 (PSFLDTLRLA…RIVNLDLKLI (136 aa)). The 196-residue stretch at 158–353 (ADVGLVGFPN…VKSQLRRTLV (196 aa)) folds into the OBG-type G domain. GTP contacts are provided by residues 164–171 (GFPNAGKS), 211–215 (DLPGL), and 287–290 (NKMD).

This sequence belongs to the TRAFAC class OBG-HflX-like GTPase superfamily. OBG GTPase family.

The protein localises to the nucleus. It is found in the nucleolus. May be involved in the ribosome maturation process. The chain is GTP-binding protein 10 homolog from Drosophila pseudoobscura pseudoobscura (Fruit fly).